The sequence spans 119 residues: Large ribosomal subunit protein uL14m (119 aa).

Belongs to the universal ribosomal protein uL14 family.

The protein resides in the mitochondrion. This Tetrahymena pyriformis protein is Large ribosomal subunit protein uL14m.